Consider the following 454-residue polypeptide: UPF0210 protein Mhun_2657 (454 aa).

Belongs to the UPF0210 family.

This chain is UPF0210 protein Mhun_2657, found in Methanospirillum hungatei JF-1 (strain ATCC 27890 / DSM 864 / NBRC 100397 / JF-1).